The chain runs to 227 residues: PKHD-type hydroxylase Bamb_4192 (227 aa).

The Fe2OG dioxygenase domain maps to 78–178; sequence KVFPPLFNRY…RVASFFWIQS (101 aa). Fe cation contacts are provided by histidine 96, aspartate 98, and histidine 159. Arginine 169 is a binding site for 2-oxoglutarate.

Fe(2+) serves as cofactor. Requires L-ascorbate as cofactor.

The polypeptide is PKHD-type hydroxylase Bamb_4192 (Burkholderia ambifaria (strain ATCC BAA-244 / DSM 16087 / CCUG 44356 / LMG 19182 / AMMD) (Burkholderia cepacia (strain AMMD))).